A 365-amino-acid chain; its full sequence is 3-galactosyl-N-acetylglucosaminide 4-alpha-L-fucosyltransferase FUT3 (365 aa).

At 1–15 (MYPPGCAKVKCSWHH) the chain is on the cytoplasmic side. The chain crosses the membrane as a helical; Signal-anchor for type II membrane protein span at residues 16–34 (CLPGLLLQLLLALCFFSYL). The Lumenal segment spans residues 35-365 (RMSQEKPKPK…TVPSIASWFQ (331 aa)). N-linked (GlcNAc...) asparagine glycans are attached at residues Asn-100, Asn-158, and Asn-189.

Belongs to the glycosyltransferase 10 family. In terms of processing, glycosylated. As to expression, liver, kidney, lung and brain.

The protein resides in the golgi apparatus. Its subcellular location is the golgi stack membrane. It catalyses the reaction a beta-D-galactosyl-(1-&gt;3)-N-acetyl-beta-D-glucosaminyl derivative + GDP-beta-L-fucose = a beta-D-galactosyl-(1-&gt;3)-[alpha-L-fucosyl-(1-&gt;4)]-N-acetyl-beta-D-glucosaminyl derivative + GDP + H(+). The enzyme catalyses an N-acetyl-alpha-neuraminyl-(2-&gt;3)-beta-D-galactosyl-(1-&gt;4)-N-acetyl-beta-D-glucosaminyl derivative + GDP-beta-L-fucose = an alpha-Neu5Ac-(2-&gt;3)-beta-D-Gal-(1-&gt;4)-[alpha-L-Fuc-(1-&gt;3)]-beta-D-GlcNAc derivative + GDP + H(+). The catalysed reaction is a beta-D-galactosyl-(1-&gt;4)-N-acetyl-beta-D-glucosaminyl derivative + GDP-beta-L-fucose = a beta-D-galactosyl-(1-&gt;4)-[alpha-L-fucosyl-(1-&gt;3)]-N-acetyl-beta-D-glucosaminyl derivative + GDP + H(+). It carries out the reaction an alpha-Neu5Ac-(2-&gt;3)-beta-D-Gal-(1-&gt;4)-beta-D-GlcNAc-(1-&gt;3)-beta-D-Gal-(1-&gt;4)-[alpha-L-Fuc-(1-&gt;3)]-beta-D-GlcNAc derivative + GDP-beta-L-fucose = an alpha-Neu5Ac-(2-&gt;3)-beta-D-Gal-(1-&gt;4)-[alpha-L-Fuc-(1-&gt;3)]-beta-D-GlcNAc-(1-&gt;3)-beta-D-Gal-(1-&gt;4)-[alpha-L-Fuc-(1-&gt;3)]-beta-D-GlcNAc derivative + GDP + H(+). It catalyses the reaction Lc4Cer + GDP-beta-L-fucose = a lactoside III(4)-a-Fuc-Lc4Cer + GDP + H(+). The enzyme catalyses a beta-D-Gal-(1-&gt;3)-beta-D-GlcNAc-(1-&gt;3)-beta-D-Gal-(1-&gt;4)-beta-D-Glc-(1&lt;-&gt;1')-Cer(d18:1(4E)) + GDP-beta-L-fucose = a III(4)-a-Fuc-Lc4Cer(d18:1(4E)) + GDP + H(+). The catalysed reaction is N-acetyl-alpha-neuraminosyl-(2-&gt;3)-beta-D-galactosyl-(1-&gt;3)-[N-acetyl-alpha-neuraminosyl-(2-&gt;6)]-N-acetyl-beta-D-glucosaminyl-(1-&gt;3)-beta-D-galactosyl-(1-&gt;4)-beta-D-glucosyl-(1&lt;-&gt;1')-N-acyl-sphing-4-enine + GDP-beta-L-fucose = N-acetyl-alpha-neuraminosyl-(2-&gt;3)-beta-D-galactosyl-(1-&gt;3)-alpha-L-fucosyl-(1-&gt;4)-[N-acetyl-alpha-neuraminosyl-(2-&gt;6)-N-acetyl-beta-D-glucosaminyl-(1-&gt;3)]-beta-D-galactosyl-(1-&gt;4)-beta-D-glucosyl-(1&lt;-&gt;1')-N-acyl-sphing-4-enine + GDP + H(+). It carries out the reaction N-acetyl-alpha-neuraminosyl-(2-&gt;3)-beta-D-galactosyl-(1-&gt;3)-N-acetyl-beta-D-glucosaminyl-(1-&gt;3)-beta-D-galactosyl-(1-&gt;4)-beta-D-glucosyl-(1&lt;-&gt;1')-N-acyl-sphing-4-enine + GDP-beta-L-fucose = N-acetyl-alpha-neuraminosyl-(2-&gt;3)-beta-D-galactosyl-(1-&gt;3)-alpha-L-fucosyl-(1-&gt;4)-[N-acetyl-beta-D-glucosaminyl-(1-&gt;3)]-beta-D-galactosyl-(1-&gt;4)-beta-D-glucosyl-(1&lt;-&gt;1')-N-acyl-sphing-4-enine + GDP + H(+). It catalyses the reaction beta-D-galactosyl-(1-&gt;3)-N-acetyl-D-glucosamine + GDP-beta-L-fucose = beta-D-galactosyl-(1-&gt;3)-[alpha-L-fucosyl-(1-&gt;4)]-N-acetyl-D-glucosamine + GDP + H(+). The enzyme catalyses alpha-L-Fuc-(1-&gt;2)-beta-D-Gal-(1-&gt;3)-D-GlcNAc + GDP-beta-L-fucose = alpha-L-Fuc-(1-&gt;2)-beta-D-Gal-(1-&gt;3)-[alpha-L-Fuc-(1-&gt;4)]-D-GlcNAc + GDP + H(+). The catalysed reaction is alpha-L-Fuc-(1-&gt;2)-beta-D-Gal-(1-&gt;4)-D-GlcNAc + GDP-beta-L-fucose = alpha-L-Fuc-(1-&gt;2)-beta-D-Gal-(1-&gt;4)-[alpha-L-Fuc-(1-&gt;3)]-D-GlcNAc + GDP + H(+). It carries out the reaction beta-D-galactosyl-(1-&gt;4)-N-acetyl-D-glucosamine + GDP-beta-L-fucose = beta-D-galactosyl-(1-&gt;4)-[alpha-L-fucosyl-(1-&gt;3)]-N-acetyl-D-glucosamine + GDP + H(+). It catalyses the reaction lactose + GDP-beta-L-fucose = beta-D-galactosyl-(1-&gt;4)-[alpha-L-fucosyl-(1-&gt;3)]-D-glucose + GDP + H(+). The enzyme catalyses an alpha-Neu5Ac-(2-&gt;3)-beta-D-Gal-(1-&gt;3)-D-GlcNAc derivative + GDP-beta-L-fucose = an alpha-Neu5Ac-(2-&gt;3)-beta-D-Gal-(1-&gt;3)-[alpha-L-Fuc-(1-&gt;4)]-beta-D-GlcNAc derivative + GDP + H(+). It participates in protein modification; protein glycosylation. Its function is as follows. Catalyzes the transfer of L-fucose, from a guanosine diphosphate-beta-L-fucose, to both the subterminal N-acetyl glucosamine (GlcNAc) of type 1 chain (beta-D-Gal-(1-&gt;3)-beta-D-GlcNAc) glycolipids and oligosaccharides via an alpha(1,4) linkage, and the subterminal glucose (Glc) or GlcNAc of type 2 chain (beta-D-Gal-(1-&gt;4)-beta-D-GlcNAc) oligosaccharides via an alpha(1,3) linkage, independently of the presence of terminal alpha-L-fucosyl-(1,2) moieties on the terminal galactose of these acceptors and participates in the blood groups Lewis determination and expression of Lewis a (Le(a)), lewis b (Le(b)), Lewis x/SSEA-1 (Le(x)) and lewis y (Le(y)) antigens. Also catalyzes the transfer of L-fucose to subterminal GlcNAc of sialyl- and disialyl-lactotetraosylceramide to produce sialyl Lewis a (sLe(a)) and disialyl Lewis a via an alpha(1,4) linkage and therefore may regulate cell surface sialyl Lewis a expression and consequently regulates adhesive properties to E-selectin, cell proliferation and migration. Catalyzes the transfer of an L-fucose to 3'-sialyl-N-acetyllactosamine by an alpha(1,3) linkage, which allows the formation of sialyl-Lewis x structure and therefore may regulate the sialyl-Lewis x surface antigen expression and consequently adhesive properties to E-selectin. Prefers type 1 chain over type 2 acceptors. Type 1 tetrasaccharide is a better acceptor than type 1 disaccharide suggesting that a beta anomeric configuration of GlcNAc in the substrate is preferred. Lewis-positive (Le(+)) individuals have an active enzyme while Lewis-negative (Le(-)) individuals have an inactive enzyme. This Bos taurus (Bovine) protein is 3-galactosyl-N-acetylglucosaminide 4-alpha-L-fucosyltransferase FUT3.